We begin with the raw amino-acid sequence, 288 residues long: Cell division protein DivIB (288 aa).

The Cytoplasmic portion of the chain corresponds to 1 to 25; sequence MEKVIDITERVPAMKKRRRRRTNFK. The helical transmembrane segment at 26-46 threads the bilayer; sequence FLALVTIFLFIIIILLYFQLP. The Extracellular portion of the chain corresponds to 47–288; the sequence is YSDIKKIDIK…LEEQNEEEPE (242 aa). One can recognise a POTRA domain in the interval 48-116; that stretch reads SDIKKIDIKG…NEVQITVEEW (69 aa). A compositionally biased stretch (basic and acidic residues) spans 253–263; sequence LIKENTEKTEE. Residues 253–288 are disordered; the sequence is LIKENTEKTEEPAEETENADTEEGGQLEEQNEEEPE. Residues 264–288 are compositionally biased toward acidic residues; sequence PAEETENADTEEGGQLEEQNEEEPE.

The protein belongs to the FtsQ/DivIB family. DivIB subfamily.

Its subcellular location is the cell membrane. Its function is as follows. Cell division protein that may be involved in stabilizing or promoting the assembly of the division complex. The polypeptide is Cell division protein DivIB (Solibacillus silvestris (strain StLB046) (Bacillus silvestris)).